The following is a 187-amino-acid chain: uncharacterized protein (187 aa).

Positions 1–28 (MRLHRTNNSRRCTILLILALKIFDFVDT) are cleaved as a signal peptide. Asparagine 58, asparagine 70, asparagine 156, and asparagine 168 each carry an N-linked (GlcNAc...) asparagine glycan.

The protein localises to the secreted. This is an uncharacterized protein from Caenorhabditis elegans.